We begin with the raw amino-acid sequence, 169 residues long: Ribosome maturation factor RimM (169 aa).

The PRC barrel domain occupies 94 to 167 (ENEFYFHEII…KITIEVMEGL (74 aa)).

The protein belongs to the RimM family. In terms of assembly, binds ribosomal protein uS19.

The protein localises to the cytoplasm. Functionally, an accessory protein needed during the final step in the assembly of 30S ribosomal subunit, possibly for assembly of the head region. Essential for efficient processing of 16S rRNA. May be needed both before and after RbfA during the maturation of 16S rRNA. It has affinity for free ribosomal 30S subunits but not for 70S ribosomes. The protein is Ribosome maturation factor RimM of Listeria monocytogenes serotype 4b (strain F2365).